We begin with the raw amino-acid sequence, 596 residues long: Phosphoenolpyruvate carboxykinase [GTP] (596 aa).

Substrate is bound by residues arginine 77 and 205–207; that span reads YGG. Residues lysine 214 and histidine 234 each coordinate Mn(2+). Residue serine 256 coordinates substrate. 257–262 contacts GTP; sequence ACGKTN. Cysteine 258 is a catalytic residue. Aspartate 283 contacts Mn(2+). A disordered region spans residues 362–388; the sequence is KKGSTEKAAHPNSRFTAPAKNNPAISP. Residue 373–375 coordinates substrate; that stretch reads NSR. GTP is bound by residues arginine 375, arginine 406, and 499-502; that span reads YGDN.

Belongs to the phosphoenolpyruvate carboxykinase [GTP] family. Monomer. The cofactor is Mn(2+).

The protein localises to the cytoplasm. It catalyses the reaction oxaloacetate + GTP = phosphoenolpyruvate + GDP + CO2. It participates in carbohydrate biosynthesis; gluconeogenesis. Functionally, catalyzes the conversion of oxaloacetate (OAA) to phosphoenolpyruvate (PEP), the rate-limiting step in the metabolic pathway that produces glucose from lactate and other precursors derived from the citric acid cycle. This chain is Phosphoenolpyruvate carboxykinase [GTP], found in Anaeromyxobacter sp. (strain K).